The primary structure comprises 145 residues: UPF0310 protein PH1033 (145 aa).

The protein belongs to the UPF0310 family.

The chain is UPF0310 protein PH1033 from Pyrococcus horikoshii (strain ATCC 700860 / DSM 12428 / JCM 9974 / NBRC 100139 / OT-3).